Here is a 1210-residue protein sequence, read N- to C-terminus: AF4/FMR2 family member 1 (1210 aa).

Disordered stretches follow at residues 1-45 (MAAQ…GEPY), 73-314 (TKSH…KPLP), 366-957 (SWPP…KPQV), and 1098-1119 (TGTPSPLSPMPSPASSVGSQSS). 2 stretches are compositionally biased toward basic and acidic residues: residues 9-35 (NDDRNLLRIREKERRNQEAHQEKEAFP) and 78-87 (HRLDASENRL). Phosphoserine occurs at positions 199, 206, and 212. Positions 215 to 238 (HSNQQTLPRTQGSSKVHGSSNNSK) are enriched in polar residues. Residue Thr-220 is modified to Phosphothreonine. The segment covering 245 to 259 (SPKDLAVKVHDKETP) has biased composition (basic and acidic residues). Over residues 267 to 279 (AQPPSQTFPPPSL) the composition is skewed to pro residues. Residues 394–419 (HVSSVTQNQKQYDTSSKTHSNSQQGT) show a composition bias toward polar residues. The segment covering 423–439 (LEDDLQLSDSEDSDSEQ) has biased composition (acidic residues). Pro residues predominate over residues 442–453 (EKPPSSSAPPSA). Residues 454-472 (PQSLPEPVASAHSSSAESE) show a composition bias toward low complexity. The span at 473–497 (STSDSDSSSDSESESSSSDSEENEP) shows a compositional bias: acidic residues. Residues 536–546 (EPPRRHPESKG) are compositionally biased toward basic and acidic residues. The segment covering 586 to 602 (QKSPAQQEPPQRQTVGT) has biased composition (polar residues). A Phosphoserine modification is found at Ser-588. Lys-681 is subject to N6-acetyllysine. The segment covering 688 to 699 (PAKDNVEDRTPE) has biased composition (basic and acidic residues). Residue Thr-697 is modified to Phosphothreonine. The segment covering 707–724 (TESQGPPHSGSGSRTSGC) has biased composition (polar residues). Residues 732-747 (EDSRKDRLPLPLRDTK) are compositionally biased toward basic and acidic residues. Ser-750 carries the post-translational modification Phosphoserine. Thr-755 is modified (phosphothreonine). A compositionally biased stretch (basic and acidic residues) spans 816–834 (GEAERDCDNKKIRLEKEIK). Residues 871 to 880 (SSSSQKPAKP) are compositionally biased toward low complexity. The span at 906–932 (NHKDSSIPKQRRVEGKGSRSSSEHKGS) shows a compositional bias: basic and acidic residues. Over residues 1110-1119 (PASSVGSQSS) the composition is skewed to low complexity.

Belongs to the AF4 family. In terms of assembly, component of the super elongation complex (SEC), at least composed of EAF1, EAF2, CDK9, MLLT3/AF9, AFF (AFF1 or AFF4), the P-TEFb complex and ELL (ELL, ELL2 or ELL3).

The protein localises to the nucleus. The polypeptide is AF4/FMR2 family member 1 (AFF1) (Homo sapiens (Human)).